Here is a 263-residue protein sequence, read N- to C-terminus: Indole-3-glycerol phosphate synthase (263 aa).

The protein belongs to the TrpC family.

The catalysed reaction is 1-(2-carboxyphenylamino)-1-deoxy-D-ribulose 5-phosphate + H(+) = (1S,2R)-1-C-(indol-3-yl)glycerol 3-phosphate + CO2 + H2O. It functions in the pathway amino-acid biosynthesis; L-tryptophan biosynthesis; L-tryptophan from chorismate: step 4/5. The polypeptide is Indole-3-glycerol phosphate synthase (Sulfurimonas denitrificans (strain ATCC 33889 / DSM 1251) (Thiomicrospira denitrificans (strain ATCC 33889 / DSM 1251))).